Consider the following 201-residue polypeptide: Superoxide dismutase [Mn] (201 aa).

Histidine 27, histidine 81, aspartate 163, and histidine 167 together coordinate Mn(2+).

It belongs to the iron/manganese superoxide dismutase family. As to quaternary structure, homodimer. Mn(2+) is required as a cofactor.

It is found in the secreted. The catalysed reaction is 2 superoxide + 2 H(+) = H2O2 + O2. Functionally, destroys superoxide anion radicals which are normally produced within the cells and which are toxic to biological systems. In Streptococcus pyogenes serotype M3 (strain ATCC BAA-595 / MGAS315), this protein is Superoxide dismutase [Mn] (sodA).